A 298-amino-acid polypeptide reads, in one-letter code: 4-hydroxy-tetrahydrodipicolinate synthase (298 aa).

Thr51 is a pyruvate binding site. The Proton donor/acceptor role is filled by Tyr139. Lys167 serves as the catalytic Schiff-base intermediate with substrate. Residue Ile209 participates in pyruvate binding.

Belongs to the DapA family. As to quaternary structure, homotetramer; dimer of dimers.

It is found in the cytoplasm. The enzyme catalyses L-aspartate 4-semialdehyde + pyruvate = (2S,4S)-4-hydroxy-2,3,4,5-tetrahydrodipicolinate + H2O + H(+). The protein operates within amino-acid biosynthesis; L-lysine biosynthesis via DAP pathway; (S)-tetrahydrodipicolinate from L-aspartate: step 3/4. In terms of biological role, catalyzes the condensation of (S)-aspartate-beta-semialdehyde [(S)-ASA] and pyruvate to 4-hydroxy-tetrahydrodipicolinate (HTPA). This Pasteurella multocida (strain Pm70) protein is 4-hydroxy-tetrahydrodipicolinate synthase.